The sequence spans 457 residues: tRNA-2-methylthio-N(6)-dimethylallyladenosine synthase (457 aa).

Residues Lys3 to Ala120 enclose the MTTase N-terminal domain. [4Fe-4S] cluster contacts are provided by Cys12, Cys49, Cys83, Cys157, Cys161, and Cys164. Residues Arg143 to Arg377 form the Radical SAM core domain. Residues Gln380–Leu447 form the TRAM domain.

Belongs to the methylthiotransferase family. MiaB subfamily. In terms of assembly, monomer. The cofactor is [4Fe-4S] cluster.

The protein localises to the cytoplasm. The enzyme catalyses N(6)-dimethylallyladenosine(37) in tRNA + (sulfur carrier)-SH + AH2 + 2 S-adenosyl-L-methionine = 2-methylsulfanyl-N(6)-dimethylallyladenosine(37) in tRNA + (sulfur carrier)-H + 5'-deoxyadenosine + L-methionine + A + S-adenosyl-L-homocysteine + 2 H(+). In terms of biological role, catalyzes the methylthiolation of N6-(dimethylallyl)adenosine (i(6)A), leading to the formation of 2-methylthio-N6-(dimethylallyl)adenosine (ms(2)i(6)A) at position 37 in tRNAs that read codons beginning with uridine. This Burkholderia vietnamiensis (strain G4 / LMG 22486) (Burkholderia cepacia (strain R1808)) protein is tRNA-2-methylthio-N(6)-dimethylallyladenosine synthase.